Consider the following 386-residue polypeptide: NADH-ubiquinone oxidoreductase 49 kDa subunit homolog (386 aa).

The protein belongs to the complex I 49 kDa subunit family.

It localises to the mitochondrion. The catalysed reaction is a ubiquinone + NADH + 5 H(+)(in) = a ubiquinol + NAD(+) + 4 H(+)(out). Functionally, core subunit of the mitochondrial membrane respiratory chain NADH dehydrogenase (Complex I) that is believed to belong to the minimal assembly required for catalysis. Complex I functions in the transfer of electrons from NADH to the respiratory chain. The immediate electron acceptor for the enzyme is believed to be ubiquinone. Component of the iron-sulfur (IP) fragment of the enzyme. Component of the iron-sulfur (IP) fragment of the enzyme. This Trypanosoma brucei brucei protein is NADH-ubiquinone oxidoreductase 49 kDa subunit homolog (NAD7).